Consider the following 346-residue polypeptide: Protein STAR1 (346 aa).

Positions 23 to 48 (QRPPPNGTVHACSKSRPPQLEPGKVG) are disordered. The ABC transporter domain occupies 112-344 (IRVRGLTRRS…KHPMARRFLE (233 aa)). 146 to 153 (GPSGSGKS) contacts ATP.

The protein belongs to the ABC transporter superfamily. ABCI family. Interacts with STAR2. In terms of tissue distribution, expressed in roots.

Its subcellular location is the membrane. Its function is as follows. Associates with STAR2 to form a functional transmembrane ABC transporter required for detoxification of aluminum (Al) in roots. Can specifically transport UDP-glucose. This Oryza sativa subsp. japonica (Rice) protein is Protein STAR1.